The sequence spans 1058 residues: Leucine--tRNA ligase, cytoplasmic (1058 aa).

A 'HIGH' region motif is present at residues 48–58 (PYMNGRLHVGH). The short motif at 711–715 (KMSKS) is the 'KMSKS' region element. Position 714 (Lys-714) interacts with ATP.

Belongs to the class-I aminoacyl-tRNA synthetase family.

The protein localises to the cytoplasm. It catalyses the reaction tRNA(Leu) + L-leucine + ATP = L-leucyl-tRNA(Leu) + AMP + diphosphate. The sequence is that of Leucine--tRNA ligase, cytoplasmic (leuS) from Dictyostelium discoideum (Social amoeba).